A 356-amino-acid polypeptide reads, in one-letter code: Uroporphyrinogen decarboxylase (356 aa).

Substrate contacts are provided by residues arginine 23–arginine 27, aspartate 72, tyrosine 148, serine 203, and histidine 321.

The protein belongs to the uroporphyrinogen decarboxylase family. Homodimer.

The protein resides in the cytoplasm. The catalysed reaction is uroporphyrinogen III + 4 H(+) = coproporphyrinogen III + 4 CO2. Its pathway is porphyrin-containing compound metabolism; protoporphyrin-IX biosynthesis; coproporphyrinogen-III from 5-aminolevulinate: step 4/4. Its function is as follows. Catalyzes the decarboxylation of four acetate groups of uroporphyrinogen-III to yield coproporphyrinogen-III. The chain is Uroporphyrinogen decarboxylase from Chloroflexus aggregans (strain MD-66 / DSM 9485).